The primary structure comprises 253 residues: Testis-expressed protein 47 (253 aa).

As to expression, testis-specific.

This is Testis-expressed protein 47 from Homo sapiens (Human).